The sequence spans 436 residues: Phosphate-repressible acid phosphatase (436 aa).

The signal sequence occupies residues 1 to 20; the sequence is MKGTAASALLIALSATAAQA. N-linked (GlcNAc...) asparagine glycosylation is found at Asn227, Asn283, and Asn304.

As to quaternary structure, monomer.

It catalyses the reaction a phosphate monoester + H2O = an alcohol + phosphate. The polypeptide is Phosphate-repressible acid phosphatase (pacA) (Aspergillus niger).